Reading from the N-terminus, the 279-residue chain is Acetylglutamate kinase (279 aa).

Substrate contacts are provided by residues 64 to 65, arginine 86, and asparagine 177; that span reads GG.

Belongs to the acetylglutamate kinase family. ArgB subfamily.

Its subcellular location is the cytoplasm. The enzyme catalyses N-acetyl-L-glutamate + ATP = N-acetyl-L-glutamyl 5-phosphate + ADP. It functions in the pathway amino-acid biosynthesis; L-arginine biosynthesis; N(2)-acetyl-L-ornithine from L-glutamate: step 2/4. Its function is as follows. Catalyzes the ATP-dependent phosphorylation of N-acetyl-L-glutamate. The polypeptide is Acetylglutamate kinase (Campylobacter jejuni subsp. doylei (strain ATCC BAA-1458 / RM4099 / 269.97)).